The chain runs to 147 residues: Hemoglobin subunit beta-2 (147 aa).

A Globin domain is found at 3–147; the sequence is EWTDSERAII…VVSALGRQYH (145 aa). Residues histidine 64 and histidine 93 each contribute to the heme b site.

Belongs to the globin family. In terms of assembly, hb 3 is a heterotetramer of two alpha-2 and two beta-2 chains. As to expression, red blood cells.

Involved in oxygen transport from gills to the various peripheral tissues. The sequence is that of Hemoglobin subunit beta-2 (hbb2) from Arctogadus glacialis (Arctic cod).